The chain runs to 293 residues: Triacylglycerol lipase (293 aa).

The region spanning 10 to 206 (PILLVHGLFG…YYSWSGIIKG (197 aa)) is the AB hydrolase-1 domain. Residue L17 coordinates substrate. Residue S83 is the Nucleophile of the active site. Residue Q84 coordinates substrate. A Ca(2+)-binding site is contributed by D217. Active-site charge relay system residues include D238 and H260. Residues D262, H266, and R269 each contribute to the Ca(2+) site.

Belongs to the AB hydrolase superfamily. Pseudomonas lipase family. Ca(2+) is required as a cofactor.

The protein localises to the secreted. It carries out the reaction a triacylglycerol + H2O = a diacylglycerol + a fatty acid + H(+). In terms of biological role, catalyzes the hydrolysis of triacylglycerols, with the highest activity with tributyrin (C4), lower activity with tricaprylin (C8), and much lower activity with triacetin (C2), trilaurin (C12) and triolein (C18). This is Triacylglycerol lipase (lips) from Pseudomonas fragi.